The following is a 175-amino-acid chain: Peptide deformylase (175 aa).

Residues Cys-99 and His-141 each coordinate Fe cation. Residue Glu-142 is part of the active site. His-145 is a Fe cation binding site.

This sequence belongs to the polypeptide deformylase family. Fe(2+) is required as a cofactor.

The catalysed reaction is N-terminal N-formyl-L-methionyl-[peptide] + H2O = N-terminal L-methionyl-[peptide] + formate. In terms of biological role, removes the formyl group from the N-terminal Met of newly synthesized proteins. Requires at least a dipeptide for an efficient rate of reaction. N-terminal L-methionine is a prerequisite for activity but the enzyme has broad specificity at other positions. The chain is Peptide deformylase from Rickettsia canadensis (strain McKiel).